A 283-amino-acid polypeptide reads, in one-letter code: Putative 4-diphosphocytidyl-2-C-methyl-D-erythritol kinase (283 aa).

Lys10 is an active-site residue. Residue 94-104 (PVCAGLGGGST) participates in ATP binding. Asp136 is an active-site residue.

The protein belongs to the GHMP kinase family. IspE subfamily.

The catalysed reaction is 4-CDP-2-C-methyl-D-erythritol + ATP = 4-CDP-2-C-methyl-D-erythritol 2-phosphate + ADP + H(+). In terms of biological role, catalyzes the phosphorylation of the position 2 hydroxy group of 4-diphosphocytidyl-2C-methyl-D-erythritol. The polypeptide is Putative 4-diphosphocytidyl-2-C-methyl-D-erythritol kinase (Streptococcus agalactiae serotype III (strain NEM316)).